The following is a 513-amino-acid chain: Cytochrome P450 1A2 (513 aa).

An O-linked (GlcNAc) serine glycan is attached at serine 68. Phenylalanine 225 contributes to the substrate binding site. Heme is bound at residue cysteine 456.

This sequence belongs to the cytochrome P450 family. Interacts with PGRMC1; the interaction requires PGRMC1 homodimerization. It depends on heme as a cofactor. As to expression, found in lung and liver.

The protein localises to the endoplasmic reticulum membrane. Its subcellular location is the microsome membrane. It carries out the reaction an organic molecule + reduced [NADPH--hemoprotein reductase] + O2 = an alcohol + oxidized [NADPH--hemoprotein reductase] + H2O + H(+). The enzyme catalyses 17beta-estradiol + reduced [NADPH--hemoprotein reductase] + O2 = 2-hydroxy-17beta-estradiol + oxidized [NADPH--hemoprotein reductase] + H2O + H(+). It catalyses the reaction 17beta-estradiol + reduced [NADPH--hemoprotein reductase] + O2 = 4-hydroxy-17beta-estradiol + oxidized [NADPH--hemoprotein reductase] + H2O + H(+). The catalysed reaction is estrone + reduced [NADPH--hemoprotein reductase] + O2 = 2-hydroxyestrone + oxidized [NADPH--hemoprotein reductase] + H2O + H(+). It carries out the reaction estrone + reduced [NADPH--hemoprotein reductase] + O2 = 4-hydroxyestrone + oxidized [NADPH--hemoprotein reductase] + H2O + H(+). The enzyme catalyses cholesterol + reduced [NADPH--hemoprotein reductase] + O2 = 25-hydroxycholesterol + oxidized [NADPH--hemoprotein reductase] + H2O + H(+). It catalyses the reaction all-trans-retinol + reduced [NADPH--hemoprotein reductase] + O2 = all-trans-retinal + oxidized [NADPH--hemoprotein reductase] + 2 H2O + H(+). The catalysed reaction is all-trans-retinal + reduced [NADPH--hemoprotein reductase] + O2 = all-trans-retinoate + oxidized [NADPH--hemoprotein reductase] + H2O + 2 H(+). It carries out the reaction (5Z,8Z,11Z,14Z)-eicosatetraenoate + reduced [NADPH--hemoprotein reductase] + O2 = (14R,15S)-epoxy-(5Z,8Z,11Z)-eicosatrienoate + oxidized [NADPH--hemoprotein reductase] + H2O + H(+). The enzyme catalyses (5Z,8Z,11Z,14Z)-eicosatetraenoate + reduced [NADPH--hemoprotein reductase] + O2 = (14S,15R)-epoxy-(5Z,8Z,11Z)-eicosatrienoate + oxidized [NADPH--hemoprotein reductase] + H2O + H(+). It catalyses the reaction (5Z,8Z,11Z,14Z,17Z)-eicosapentaenoate + reduced [NADPH--hemoprotein reductase] + O2 = (17R,18S)-epoxy-(5Z,8Z,11Z,14Z)-eicosatetraenoate + oxidized [NADPH--hemoprotein reductase] + H2O + H(+). The catalysed reaction is (4Z,7Z,10Z,13Z,16Z,19Z)-docosahexaenoate + reduced [NADPH--hemoprotein reductase] + O2 = (19R,20S)-epoxy-(4Z,7Z,10Z,13Z,16Z)-docosapentaenoate + oxidized [NADPH--hemoprotein reductase] + H2O + H(+). It carries out the reaction (5S)-hydroperoxy-(6E,8Z,11Z,14Z)-eicosatetraenoate = 5-oxo-(6E,8Z,11Z,14Z)-eicosatetraenoate + H2O. The enzyme catalyses (12S)-hydroperoxy-(5Z,8Z,10E,14Z)-eicosatetraenoate = 12-oxo-(5Z,8Z,10E,14Z)-eicosatetraenoate + H2O. It catalyses the reaction (15S)-hydroperoxy-(5Z,8Z,11Z,13E)-eicosatetraenoate = 15-oxo-(5Z,8Z,11Z,13E)-eicosatetraenoate + H2O. The catalysed reaction is (13S)-hydroperoxy-(9Z,11E)-octadecadienoate = 13-oxo-(9Z,11E)-octadecadienoate + H2O. It carries out the reaction (5Z,8Z,11Z,14Z)-eicosatetraenoate + reduced [NADPH--hemoprotein reductase] + O2 = 13-hydroxy-(5Z,8Z,11Z,14Z)-eicosatetraenoate + oxidized [NADPH--hemoprotein reductase] + H2O + H(+). The enzyme catalyses (5Z,8Z,11Z,14Z)-eicosatetraenoate + reduced [NADPH--hemoprotein reductase] + O2 = 19-hydroxy-(5Z,8Z,11Z,14Z)-eicosatetraenoate + oxidized [NADPH--hemoprotein reductase] + H2O + H(+). It catalyses the reaction (9Z,12Z)-octadecadienoate + reduced [NADPH--hemoprotein reductase] + O2 = 11-hydroxy-(9Z,12Z)-octadecadienoate + oxidized [NADPH--hemoprotein reductase] + H2O + H(+). Its pathway is cofactor metabolism; retinol metabolism. It participates in steroid metabolism; cholesterol metabolism. The protein operates within lipid metabolism; arachidonate metabolism. A cytochrome P450 monooxygenase involved in the metabolism of various endogenous substrates, including fatty acids, steroid hormones and vitamins. Mechanistically, uses molecular oxygen inserting one oxygen atom into a substrate, and reducing the second into a water molecule, with two electrons provided by NADPH via cytochrome P450 reductase (NADPH--hemoprotein reductase). Catalyzes the hydroxylation of carbon-hydrogen bonds. Exhibits high catalytic activity for the formation of hydroxyestrogens from estrone (E1) and 17beta-estradiol (E2), namely 2-hydroxy E1 and E2. Metabolizes cholesterol toward 25-hydroxycholesterol, a physiological regulator of cellular cholesterol homeostasis. May act as a major enzyme for all-trans retinoic acid biosynthesis in the liver. Catalyzes two successive oxidative transformation of all-trans retinol to all-trans retinal and then to the active form all-trans retinoic acid. Primarily catalyzes stereoselective epoxidation of the last double bond of polyunsaturated fatty acids (PUFA), displaying a strong preference for the (R,S) stereoisomer. Catalyzes bisallylic hydroxylation and omega-1 hydroxylation of PUFA. May also participate in eicosanoids metabolism by converting hydroperoxide species into oxo metabolites (lipoxygenase-like reaction, NADPH-independent). Plays a role in the oxidative metabolism of xenobiotics. Catalyzes the N-hydroxylation of heterocyclic amines and the O-deethylation of phenacetin. Metabolizes caffeine via N3-demethylation. This chain is Cytochrome P450 1A2 (CYP1A2), found in Mesocricetus auratus (Golden hamster).